The following is a 1473-amino-acid chain: Ovostatin (1473 aa).

The signal sequence occupies residues 1–36 (MHCFLGREILSFFCLTVRKMWLKFILAILLLHAAAG). 13 N-linked (GlcNAc...) asparagine glycosylation sites follow: asparagine 67, asparagine 82, asparagine 89, asparagine 191, asparagine 342, asparagine 403, asparagine 527, asparagine 588, asparagine 757, asparagine 1141, asparagine 1221, asparagine 1315, and asparagine 1347.

It belongs to the protease inhibitor I39 (alpha-2-macroglobulin) family. As to quaternary structure, homotetramer, which consists of two pairs of disulfide-linked chains. In terms of processing, lacks the thioester bond found in other members of this family. Glycosylated; contains 56 glucosamine units per subunit.

It localises to the secreted. Is able to inhibit all four classes of proteinases by a unique 'trapping' mechanism. This protein has a peptide stretch, called the 'bait region' which contains specific cleavage sites for different proteinases. When a proteinase cleaves the bait region, a conformational change is induced in the protein which traps the proteinase. The entrapped enzyme remains active against low molecular weight substrates (activity against high molecular weight substrates is greatly reduced). The polypeptide is Ovostatin (Gallus gallus (Chicken)).